A 369-amino-acid chain; its full sequence is Histidinol-phosphate aminotransferase 2 (369 aa).

K229 carries the post-translational modification N6-(pyridoxal phosphate)lysine.

Belongs to the class-II pyridoxal-phosphate-dependent aminotransferase family. Histidinol-phosphate aminotransferase subfamily. As to quaternary structure, homodimer. Requires pyridoxal 5'-phosphate as cofactor.

It catalyses the reaction L-histidinol phosphate + 2-oxoglutarate = 3-(imidazol-4-yl)-2-oxopropyl phosphate + L-glutamate. It functions in the pathway amino-acid biosynthesis; L-histidine biosynthesis; L-histidine from 5-phospho-alpha-D-ribose 1-diphosphate: step 7/9. In Pseudomonas aeruginosa (strain ATCC 15692 / DSM 22644 / CIP 104116 / JCM 14847 / LMG 12228 / 1C / PRS 101 / PAO1), this protein is Histidinol-phosphate aminotransferase 2 (hisC2).